The chain runs to 444 residues: Glutamate--tRNA ligase 1 (444 aa).

The 'HIGH' region signature appears at 10–20 (PSPTGRLHLGN). A 'KMSKS' region motif is present at residues 241 to 245 (GLSKR). Residue lysine 244 coordinates ATP.

The protein belongs to the class-I aminoacyl-tRNA synthetase family. Glutamate--tRNA ligase type 1 subfamily. In terms of assembly, monomer.

Its subcellular location is the cytoplasm. The enzyme catalyses tRNA(Glu) + L-glutamate + ATP = L-glutamyl-tRNA(Glu) + AMP + diphosphate. In terms of biological role, catalyzes the attachment of glutamate to tRNA(Glu) in a two-step reaction: glutamate is first activated by ATP to form Glu-AMP and then transferred to the acceptor end of tRNA(Glu). This chain is Glutamate--tRNA ligase 1, found in Rhodospirillum rubrum (strain ATCC 11170 / ATH 1.1.1 / DSM 467 / LMG 4362 / NCIMB 8255 / S1).